The primary structure comprises 302 residues: MALLITPAGVATVNRHSTIPSDTHTSREKPRFHKPCRNDLESLLSEGRLDTSVQTPCPQHPHTQLSCEPQPLEHSSCLSTCLAGCFLPVPSSPHTHPLLPGSRWLPPPLALLMGTLSPGLAVKPSWVPRFPLLARQSPATSVGMPLSAATQPGSVGRLHFPKLRSSSPFSGHSDENKATGQGRENRDQPQRPSHLCECPEAAKQSATNGVAETNRSVFPLGSEARSLSLRRQESQPHSGSSRRESVSCSPSFWCCWQPLAFLTCGCAAPISVPGVTRPSPRPCCVSPPLVRLQSLGLGPTQI.

Disordered stretches follow at residues 15–34 (RHSTIPSDTHTSREKPRFHK), 143–195 (GMPL…PSHL), and 221–246 (GSEARSLSLRRQESQPHSGSSRRESV). Residues 172–189 (HSDENKATGQGRENRDQP) show a composition bias toward basic and acidic residues.

This is an uncharacterized protein from Homo sapiens (Human).